A 103-amino-acid polypeptide reads, in one-letter code: Large ribosomal subunit protein bL21 (103 aa).

The protein belongs to the bacterial ribosomal protein bL21 family. In terms of assembly, part of the 50S ribosomal subunit. Contacts protein L20.

Its function is as follows. This protein binds to 23S rRNA in the presence of protein L20. In Ruminiclostridium cellulolyticum (strain ATCC 35319 / DSM 5812 / JCM 6584 / H10) (Clostridium cellulolyticum), this protein is Large ribosomal subunit protein bL21.